The primary structure comprises 160 residues: Protransforming growth factor alpha (160 aa).

A signal peptide spans 1-23; that stretch reads MVPSAGQLALFALGIVLAACQAL. The propeptide at 24-39 is removed in mature form; sequence ENSTSPLSADPPVAAA. At 24 to 98 the chain is on the extracellular side; the sequence is ENSTSPLSAD…AVVAASQKKQ (75 aa). Asparagine 25 carries an N-linked (GlcNAc...) asparagine glycan. Positions 43–83 constitute an EGF-like domain; that stretch reads HFNDCPDSHTQFCFHGTCRFLVQEDKPACVCHSGYVGARCE. 3 cysteine pairs are disulfide-bonded: cysteine 47/cysteine 60, cysteine 55/cysteine 71, and cysteine 73/cysteine 82. Residues 90-160 constitute a propeptide, removed in mature form; the sequence is VVAASQKKQA…TACCHSETVV (71 aa). A helical membrane pass occupies residues 99-124; the sequence is AITALVVVSIVALAVLIITCVLIHCC. Over 125 to 160 the chain is Cytoplasmic; the sequence is QVRKHCEWCRALICRHEKPSALLKGRTACCHSETVV. S-palmitoyl cysteine attachment occurs at residues cysteine 153 and cysteine 154.

Interacts with the PDZ domains of MAGI3, SDCBP and SNTA1. The interaction with SDCBP, is required for the targeting to the cell surface. In the endoplasmic reticulum, in its immature form (i.e. with a prosegment and lacking full N-glycosylation), interacts with CNIH. In the Golgi apparatus, may form a complex with CNIH and GORASP2. Interacts (via cytoplasmic C-terminal domain) with NKD2. As to expression, isoform 1, isoform 3 and isoform 4 are expressed in keratinocytes and tumor-derived cell lines.

The protein resides in the secreted. It is found in the extracellular space. The protein localises to the cell membrane. Functionally, TGF alpha is a mitogenic polypeptide that is able to bind to the EGF receptor/EGFR and to act synergistically with TGF beta to promote anchorage-independent cell proliferation in soft agar. This Homo sapiens (Human) protein is Protransforming growth factor alpha (TGFA).